The chain runs to 350 residues: Kelch domain-containing protein 9 (350 aa).

Kelch repeat units follow at residues 39–89 (RFYL…LVGG), 91–137 (WLCV…SHTC), and 325–350 (QLYLVGGFGEDGRTASPQVCILEFFI).

In terms of assembly, interacts with CCNA1.

This chain is Kelch domain-containing protein 9 (Klhdc9), found in Mus musculus (Mouse).